Consider the following 603-residue polypeptide: Elongation factor 4 (603 aa).

The tr-type G domain maps to Asn-2–Lys-184. Residues Asp-14 to Thr-19 and Asn-131 to Asp-134 contribute to the GTP site.

Belongs to the TRAFAC class translation factor GTPase superfamily. Classic translation factor GTPase family. LepA subfamily.

It is found in the cell inner membrane. The catalysed reaction is GTP + H2O = GDP + phosphate + H(+). Functionally, required for accurate and efficient protein synthesis under certain stress conditions. May act as a fidelity factor of the translation reaction, by catalyzing a one-codon backward translocation of tRNAs on improperly translocated ribosomes. Back-translocation proceeds from a post-translocation (POST) complex to a pre-translocation (PRE) complex, thus giving elongation factor G a second chance to translocate the tRNAs correctly. Binds to ribosomes in a GTP-dependent manner. The polypeptide is Elongation factor 4 (Polaromonas naphthalenivorans (strain CJ2)).